We begin with the raw amino-acid sequence, 648 residues long: Replication restart protein PriA (648 aa).

The Helicase ATP-binding domain occupies 131-297 (TILNESNKPT…EIGKYQLVTL (167 aa)). 144–151 (GVTGSGKT) serves as a coordination point for ATP. The short motif at 240–243 (DEEH) is the DEAH box element. Zn(2+) contacts are provided by Cys358, Cys361, Cys367, Cys370, Cys385, Cys388, Cys398, and Cys401. Residues 393 to 548 (KIFSSCPECL…SFFANELEIR (156 aa)) enclose the Helicase C-terminal domain.

Belongs to the helicase family. PriA subfamily. In terms of assembly, component of the replication restart primosome. Zn(2+) is required as a cofactor.

It carries out the reaction Couples ATP hydrolysis with the unwinding of duplex DNA by translocating in the 3'-5' direction.. The catalysed reaction is ATP + H2O = ADP + phosphate + H(+). Functionally, initiates the restart of stalled replication forks, which reloads the replicative helicase on sites other than the origin of replication. Recognizes and binds to abandoned replication forks and remodels them to uncover a helicase loading site. Promotes assembly of the primosome at these replication forks. This is Replication restart protein PriA from Rickettsia conorii (strain ATCC VR-613 / Malish 7).